A 182-amino-acid chain; its full sequence is Hexose transport activator protein (182 aa).

The segment at 46 to 65 (GIWGPMEKKPGGVGKKKGSE) is disordered.

Its function is as follows. Multicopy expression suppresses glucose-uptake defects in various yeast mutants. The chain is Hexose transport activator protein (AHT1) from Saccharomyces cerevisiae (strain ATCC 204508 / S288c) (Baker's yeast).